The sequence spans 168 residues: Small ribosomal subunit protein uS5 (168 aa).

Residues 12 to 75 enclose the S5 DRBM domain; the sequence is YQEKLVSVTR…DQAKKNMVYI (64 aa).

This sequence belongs to the universal ribosomal protein uS5 family. In terms of assembly, part of the 30S ribosomal subunit. Contacts proteins S4 and S8.

Its function is as follows. With S4 and S12 plays an important role in translational accuracy. Functionally, located at the back of the 30S subunit body where it stabilizes the conformation of the head with respect to the body. This is Small ribosomal subunit protein uS5 from Legionella pneumophila (strain Paris).